Reading from the N-terminus, the 133-residue chain is Small ribosomal subunit protein uS8 (133 aa).

Belongs to the universal ribosomal protein uS8 family. Part of the 30S ribosomal subunit. Contacts proteins S5 and S12.

One of the primary rRNA binding proteins, it binds directly to 16S rRNA central domain where it helps coordinate assembly of the platform of the 30S subunit. This is Small ribosomal subunit protein uS8 from Synechococcus sp. (strain WH7803).